The sequence spans 302 residues: N-acetylmuramic acid 6-phosphate etherase (302 aa).

The SIS domain maps to 58 to 221; it reads IFERFKKGGR…TTTLMIKLGK (164 aa). Glu-86 acts as the Proton donor in catalysis. Residue Glu-117 is part of the active site.

This sequence belongs to the GCKR-like family. MurNAc-6-P etherase subfamily. As to quaternary structure, homodimer.

It catalyses the reaction N-acetyl-D-muramate 6-phosphate + H2O = N-acetyl-D-glucosamine 6-phosphate + (R)-lactate. It functions in the pathway amino-sugar metabolism; N-acetylmuramate degradation. Its function is as follows. Specifically catalyzes the cleavage of the D-lactyl ether substituent of MurNAc 6-phosphate, producing GlcNAc 6-phosphate and D-lactate. The sequence is that of N-acetylmuramic acid 6-phosphate etherase from Mycoplasma mycoides subsp. mycoides SC (strain CCUG 32753 / NCTC 10114 / PG1).